The sequence spans 223 residues: Ribosome maturation factor RimM (223 aa).

Residues methionine 1 to proline 12 show a composition bias toward low complexity. Disordered regions lie at residues methionine 1–leucine 44 and alanine 204–glycine 223. Residues glutamate 136 to leucine 210 enclose the PRC barrel domain.

It belongs to the RimM family. In terms of assembly, binds ribosomal protein uS19.

It localises to the cytoplasm. Its function is as follows. An accessory protein needed during the final step in the assembly of 30S ribosomal subunit, possibly for assembly of the head region. Essential for efficient processing of 16S rRNA. May be needed both before and after RbfA during the maturation of 16S rRNA. It has affinity for free ribosomal 30S subunits but not for 70S ribosomes. The chain is Ribosome maturation factor RimM from Methylorubrum extorquens (strain PA1) (Methylobacterium extorquens).